The chain runs to 500 residues: NAD(P)H-quinone oxidoreductase chain 4, chloroplastic (500 aa).

15 consecutive transmembrane segments (helical) span residues 4–24, 31–51, 87–107, 111–131, 134–154, 167–187, 207–227, 242–262, 274–294, 305–325, 330–350, 358–378, 386–406, 416–436, and 462–482; these read LPWLTIIVILPISAGSSIPLF, IIRWYTLGICLLEFLLMTYTF, IGPISLTSFVTTLATLAAWPV, PRLFYFLMLAMYSGQVGLFAS, ILLFFLMWELELIPVYLLISM, FILYTAGGSIFISMGASSMGL, VVLEIVFYLGFFIAHAIKLPI, HYSTCMLLAGIPLKMGGYGLI, SLFSPWLVIVGAVQIIYAALT, IAYSSVSHMGFVIVGIGSMAD, GAILQMISHGLIGAALFFLAG, TLFLDGIGGMAIPMSKISTMF, LALPGMSGFVAESMVLLGIIT, IVIAAIMAIGMILTPIHLLSM, and IFISICLFLPVIGTGTYPDLV.

This sequence belongs to the complex I subunit 4 family.

It is found in the plastid. The protein resides in the chloroplast thylakoid membrane. The catalysed reaction is a plastoquinone + NADH + (n+1) H(+)(in) = a plastoquinol + NAD(+) + n H(+)(out). The enzyme catalyses a plastoquinone + NADPH + (n+1) H(+)(in) = a plastoquinol + NADP(+) + n H(+)(out). This chain is NAD(P)H-quinone oxidoreductase chain 4, chloroplastic, found in Cycas taitungensis (Prince sago).